Here is a 178-residue protein sequence, read N- to C-terminus: ATP synthase subunit delta (178 aa).

The protein belongs to the ATPase delta chain family. In terms of assembly, F-type ATPases have 2 components, F(1) - the catalytic core - and F(0) - the membrane proton channel. F(1) has five subunits: alpha(3), beta(3), gamma(1), delta(1), epsilon(1). F(0) has three main subunits: a(1), b(2) and c(10-14). The alpha and beta chains form an alternating ring which encloses part of the gamma chain. F(1) is attached to F(0) by a central stalk formed by the gamma and epsilon chains, while a peripheral stalk is formed by the delta and b chains.

It is found in the cell membrane. Functionally, f(1)F(0) ATP synthase produces ATP from ADP in the presence of a proton or sodium gradient. F-type ATPases consist of two structural domains, F(1) containing the extramembraneous catalytic core and F(0) containing the membrane proton channel, linked together by a central stalk and a peripheral stalk. During catalysis, ATP synthesis in the catalytic domain of F(1) is coupled via a rotary mechanism of the central stalk subunits to proton translocation. This protein is part of the stalk that links CF(0) to CF(1). It either transmits conformational changes from CF(0) to CF(1) or is implicated in proton conduction. The protein is ATP synthase subunit delta of Streptococcus agalactiae serotype Ia (strain ATCC 27591 / A909 / CDC SS700).